A 219-amino-acid chain; its full sequence is Ribosomal RNA small subunit methyltransferase G (219 aa).

The S-adenosyl-L-methionine site is built by Gly81, Leu86, and Arg150.

It belongs to the methyltransferase superfamily. RNA methyltransferase RsmG family.

The protein resides in the cytoplasm. The catalysed reaction is guanosine(527) in 16S rRNA + S-adenosyl-L-methionine = N(7)-methylguanosine(527) in 16S rRNA + S-adenosyl-L-homocysteine. Its function is as follows. Specifically methylates the N7 position of guanine in position 527 of 16S rRNA. The chain is Ribosomal RNA small subunit methyltransferase G from Magnetococcus marinus (strain ATCC BAA-1437 / JCM 17883 / MC-1).